The primary structure comprises 478 residues: Probable cyclin-dependent kinase 9 (478 aa).

The span at 1–17 (MSAQNYHAGLHQSSTQR) shows a compositional bias: polar residues. A disordered region spans residues 1-55 (MSAQNYHAGLHQSSTQRPPKRPNTEHAQEPPKRALIGGQTTPSSSGGGQTPNGTN). Positions 22 to 32 (PNTEHAQEPPK) are enriched in basic and acidic residues. The region spanning 85-413 (YEKLNKIGQG…SDEAEDDIWF (329 aa)) is the Protein kinase domain. ATP-binding positions include 91-99 (IGQGTFGEV) and K114. Catalysis depends on D217, which acts as the Proton acceptor. Residues 444-478 (HANRGRHQNAQQRPNQQQARPSNAIPAGQYRDTIF) are disordered. Residues 451–464 (QNAQQRPNQQQARP) show a composition bias toward low complexity.

The protein belongs to the protein kinase superfamily. CMGC Ser/Thr protein kinase family. CDC2/CDKX subfamily. Associates with cyclin-T (cit-1.1 or cit-1.2) to form P-TEFb.

The protein resides in the nucleus. The enzyme catalyses L-seryl-[protein] + ATP = O-phospho-L-seryl-[protein] + ADP + H(+). It carries out the reaction L-threonyl-[protein] + ATP = O-phospho-L-threonyl-[protein] + ADP + H(+). The catalysed reaction is [DNA-directed RNA polymerase] + ATP = phospho-[DNA-directed RNA polymerase] + ADP + H(+). Its function is as follows. Essential member of the cyclin-dependent kinase pair (CDK9/cyclin-T) complex, also called positive transcription elongation factor B (P-TEFb), which is proposed to facilitate the transition from abortive to production elongation by phosphorylating the CTD (C-terminal domain) of the large subunit of RNA polymerase II (RNAP II) and spt-5. In Caenorhabditis elegans, this protein is Probable cyclin-dependent kinase 9 (cdk-9).